Reading from the N-terminus, the 558-residue chain is Formate--tetrahydrofolate ligase (558 aa).

Residue 66–73 coordinates ATP; it reads TPAGEGKT.

It belongs to the formate--tetrahydrofolate ligase family.

It carries out the reaction (6S)-5,6,7,8-tetrahydrofolate + formate + ATP = (6R)-10-formyltetrahydrofolate + ADP + phosphate. It functions in the pathway one-carbon metabolism; tetrahydrofolate interconversion. This is Formate--tetrahydrofolate ligase from Clostridium kluyveri (strain NBRC 12016).